We begin with the raw amino-acid sequence, 137 residues long: Putative pre-16S rRNA nuclease (137 aa).

This sequence belongs to the YqgF nuclease family.

It localises to the cytoplasm. Could be a nuclease involved in processing of the 5'-end of pre-16S rRNA. The protein is Putative pre-16S rRNA nuclease of Clostridium botulinum (strain Eklund 17B / Type B).